We begin with the raw amino-acid sequence, 132 residues long: Large ribosomal subunit protein uL14 (132 aa).

Belongs to the universal ribosomal protein uL14 family. As to quaternary structure, part of the 50S ribosomal subunit. Forms a cluster with proteins L3 and L24e, part of which may contact the 16S rRNA in 2 intersubunit bridges.

Functionally, binds to 23S rRNA. Forms part of two intersubunit bridges in the 70S ribosome. The protein is Large ribosomal subunit protein uL14 of Thermoplasma volcanium (strain ATCC 51530 / DSM 4299 / JCM 9571 / NBRC 15438 / GSS1).